The following is a 482-amino-acid chain: Alpha-ketoglutarate semialdehyde dehydrogenase (482 aa).

Positions 1 to 28 are disordered; it reads MTDPSKNYVNGEWVTSETGETTEVTNPA. The span at 11–25 shows a compositional bias: low complexity; it reads GEWVTSETGETTEVT. C284 is an active-site residue.

Belongs to the aldehyde dehydrogenase family. As to quaternary structure, homotetramer.

The catalysed reaction is 2,5-dioxopentanoate + NADP(+) + H2O = 2-oxoglutarate + NADPH + 2 H(+). It functions in the pathway carbohydrate metabolism; D-xylose degradation. Its function is as follows. Alpha-ketoglutarate semialdehyde dehydrogenase involved in the degradation of D-xylose, a major component of hemicelluloses such as xylan. Catalyzes the fifth reaction in the xylose utilization pathway through dehydratation of alpha-ketoglutarate semialdehyde (2,5-dioxopentanoate) into alpha-ketoglutarate. In Haloferax volcanii (strain ATCC 29605 / DSM 3757 / JCM 8879 / NBRC 14742 / NCIMB 2012 / VKM B-1768 / DS2) (Halobacterium volcanii), this protein is Alpha-ketoglutarate semialdehyde dehydrogenase.